The chain runs to 118 residues: UPF0125 protein RSc1426 (118 aa).

This sequence belongs to the UPF0125 (RnfH) family.

The polypeptide is UPF0125 protein RSc1426 (Ralstonia nicotianae (strain ATCC BAA-1114 / GMI1000) (Ralstonia solanacearum)).